An 842-amino-acid chain; its full sequence is Glycogen phosphorylase, muscle form (842 aa).

Residue Ser-2 is modified to N-acetylserine. Ser-15 is modified (phosphoserine; by PHK; in form phosphorylase A). Ser-26 is subject to Phosphoserine. The AMP site is built by Asp-43 and Tyr-76. 2 positions are modified to phosphotyrosine: Tyr-204 and Tyr-227. 310–319 (RRFKSSKFGC) contributes to the AMP binding site. Residue Ser-430 is modified to Phosphoserine. At Tyr-473 the chain carries Phosphotyrosine. Residue Ser-514 is modified to Phosphoserine. Lys-681 carries the post-translational modification N6-(pyridoxal phosphate)lysine. 2 positions are modified to phosphoserine: Ser-747 and Ser-748.

It belongs to the glycogen phosphorylase family. As to quaternary structure, homodimer. Homotetramer; to form the enzymatically active phosphorylase A. Pyridoxal 5'-phosphate is required as a cofactor. In terms of processing, phosphorylation of Ser-15 converts phosphorylase B (unphosphorylated) to phosphorylase A.

It carries out the reaction [(1-&gt;4)-alpha-D-glucosyl](n) + phosphate = [(1-&gt;4)-alpha-D-glucosyl](n-1) + alpha-D-glucose 1-phosphate. With respect to regulation, allosterically regulated through the non-covalent binding of metabolites, being activated by AMP and inhibited by ATP, ADP, and glucose-6-phosphate. The activity is also controlled by post-translational modifications including phosphorylation. Functionally, allosteric enzyme that catalyzes the rate-limiting step in glycogen catabolism, the phosphorolytic cleavage of glycogen to produce glucose-1-phosphate, and plays a central role in maintaining cellular and organismal glucose homeostasis. This is Glycogen phosphorylase, muscle form from Rattus norvegicus (Rat).